A 999-amino-acid polypeptide reads, in one-letter code: Caspase recruitment domain-containing protein 14 (999 aa).

The 93-residue stretch at 15–107 folds into the CARD domain; that stretch reads DEEMLWDMLE…DVYTLVTGLQ (93 aa). Residues 125-411 are a coiled coil; it reads TECLAGAISS…QLRRLQAEAP (287 aa). Residues 409–565 form a maintains the protein in an inactive state region; it reads EAPGGPKQEA…RRPARKILSQ (157 aa). Position 541 is a phosphoserine (Ser-541). Residues 572-655 enclose the PDZ domain; sequence QGDALLEQIG…SCYLSVKINT (84 aa). The Guanylate kinase-like domain occupies 803–986; that stretch reads SESCFTLAPY…LLSCVRLAIA (184 aa).

Interacts (via CARD domain) with BCL10 (via CARD domain). Forms a complex with MALT1 and BCL10; resulting in the formation of a CBM (CARD14-BLC10-MALT1) complex. Interacts with TRAF2, TRAF3 and TRAF6.

The protein resides in the cytoplasm. Functionally, acts as a scaffolding protein that can activate the inflammatory transcription factor NF-kappa-B and p38/JNK MAP kinase signaling pathways. Forms a signaling complex with BCL10 and MALT1, and activates MALT1 proteolytic activity and inflammatory gene expression. MALT1 is indispensable for CARD14-induced activation of NF-kappa-B and p38/JNK MAP kinases. May play a role in signaling mediated by TRAF2, TRAF3 and TRAF6 and protects cells against apoptosis. The chain is Caspase recruitment domain-containing protein 14 (Card14) from Mus musculus (Mouse).